The chain runs to 460 residues: Anthocyanidin 3-O-glucoside 5-O-glucosyltransferase 1 (460 aa).

The first 22 residues, 1-22 (MVRRRVLLATFPAQGHINPALQ), serve as a signal peptide directing secretion. Catalysis depends on histidine 16, which acts as the Proton acceptor. Histidine 16 contacts an anthocyanidin. Glutamine 338, histidine 353, tryptophan 356, asparagine 357, serine 358, glutamate 361, aspartate 377, and glutamine 378 together coordinate UDP-alpha-D-glucose.

This sequence belongs to the UDP-glycosyltransferase family.

It carries out the reaction an anthocyanidin 3-O-beta-D-glucoside + UDP-alpha-D-glucose = an anthocyanidin 3,5-di-O-beta-D-glucoside + UDP + 2 H(+). It participates in pigment biosynthesis; anthocyanin biosynthesis. In terms of biological role, catalyzes the glucosylation at the O-5 position of anthocyanidin 3-glucosides to form anthocyanidin 3,5-di-O-glucosides using UDP-glucose as sugar donor. Anthocyanidin 3,5-di-O-glucosides are molecules that are responsible for pigmentation. Also acts on anthocyanidin 3-O-(6-O-malonylglucoside). Much less active with hydroxycinnamoylglucose derivatives. No activity in the absence of the 3-O-glucoside group. This chain is Anthocyanidin 3-O-glucoside 5-O-glucosyltransferase 1 (PF3R4), found in Perilla frutescens (Beefsteak mint).